The following is a 188-amino-acid chain: Ribose 1,5-bisphosphate phosphokinase PhnN (188 aa).

9-16 (GPSGAGKD) is an ATP binding site.

This sequence belongs to the ribose 1,5-bisphosphokinase family.

The catalysed reaction is alpha-D-ribose 1,5-bisphosphate + ATP = 5-phospho-alpha-D-ribose 1-diphosphate + ADP. It functions in the pathway metabolic intermediate biosynthesis; 5-phospho-alpha-D-ribose 1-diphosphate biosynthesis; 5-phospho-alpha-D-ribose 1-diphosphate from D-ribose 5-phosphate (route II): step 3/3. In terms of biological role, catalyzes the phosphorylation of ribose 1,5-bisphosphate to 5-phospho-D-ribosyl alpha-1-diphosphate (PRPP). This is Ribose 1,5-bisphosphate phosphokinase PhnN from Pectobacterium parmentieri (strain WPP163) (Pectobacterium wasabiae (strain WPP163)).